Reading from the N-terminus, the 100-residue chain is uncharacterized protein (100 aa).

This is an uncharacterized protein from Haemophilus influenzae (strain ATCC 51907 / DSM 11121 / KW20 / Rd).